The chain runs to 921 residues: Isoleucine--tRNA ligase (921 aa).

Residues 57–67 (PYANGDIHMGH) carry the 'HIGH' region motif. Residue Glu-552 coordinates L-isoleucyl-5'-AMP. Residues 593–597 (KMSKS) carry the 'KMSKS' region motif. Lys-596 contributes to the ATP binding site. Zn(2+) contacts are provided by Cys-888, Cys-891, Cys-908, and Cys-911.

This sequence belongs to the class-I aminoacyl-tRNA synthetase family. IleS type 1 subfamily. As to quaternary structure, monomer. The cofactor is Zn(2+).

Its subcellular location is the cytoplasm. The enzyme catalyses tRNA(Ile) + L-isoleucine + ATP = L-isoleucyl-tRNA(Ile) + AMP + diphosphate. Its function is as follows. Catalyzes the attachment of isoleucine to tRNA(Ile). As IleRS can inadvertently accommodate and process structurally similar amino acids such as valine, to avoid such errors it has two additional distinct tRNA(Ile)-dependent editing activities. One activity is designated as 'pretransfer' editing and involves the hydrolysis of activated Val-AMP. The other activity is designated 'posttransfer' editing and involves deacylation of mischarged Val-tRNA(Ile). This is Isoleucine--tRNA ligase from Bacillus cereus (strain AH187).